The primary structure comprises 111 residues: Large ribosomal subunit protein uL23 (111 aa).

The protein belongs to the universal ribosomal protein uL23 family. As to quaternary structure, part of the 50S ribosomal subunit. Contacts protein L29, and trigger factor when it is bound to the ribosome.

One of the early assembly proteins it binds 23S rRNA. One of the proteins that surrounds the polypeptide exit tunnel on the outside of the ribosome. Forms the main docking site for trigger factor binding to the ribosome. The chain is Large ribosomal subunit protein uL23 from Chlamydia caviae (strain ATCC VR-813 / DSM 19441 / 03DC25 / GPIC) (Chlamydophila caviae).